The primary structure comprises 473 residues: Asparagine--tRNA ligase (473 aa).

This sequence belongs to the class-II aminoacyl-tRNA synthetase family. Homodimer.

It is found in the cytoplasm. The enzyme catalyses tRNA(Asn) + L-asparagine + ATP = L-asparaginyl-tRNA(Asn) + AMP + diphosphate + H(+). The protein is Asparagine--tRNA ligase of Treponema denticola (strain ATCC 35405 / DSM 14222 / CIP 103919 / JCM 8153 / KCTC 15104).